The chain runs to 134 residues: Phosphoribosyl-AMP cyclohydrolase (134 aa).

Asp77 contributes to the Mg(2+) binding site. Cys78 provides a ligand contact to Zn(2+). Mg(2+) is bound by residues Asp79 and Asp81. Zn(2+) contacts are provided by Cys95 and Cys102.

Belongs to the PRA-CH family. In terms of assembly, homodimer. The cofactor is Mg(2+). Zn(2+) is required as a cofactor.

It localises to the cytoplasm. The catalysed reaction is 1-(5-phospho-beta-D-ribosyl)-5'-AMP + H2O = 1-(5-phospho-beta-D-ribosyl)-5-[(5-phospho-beta-D-ribosylamino)methylideneamino]imidazole-4-carboxamide. The protein operates within amino-acid biosynthesis; L-histidine biosynthesis; L-histidine from 5-phospho-alpha-D-ribose 1-diphosphate: step 3/9. Functionally, catalyzes the hydrolysis of the adenine ring of phosphoribosyl-AMP. The sequence is that of Phosphoribosyl-AMP cyclohydrolase from Pseudomonas paraeruginosa (strain DSM 24068 / PA7) (Pseudomonas aeruginosa (strain PA7)).